The chain runs to 144 residues: Large ribosomal subunit protein uL15 (144 aa).

The segment at Met-1–Gly-53 is disordered. Positions Arg-21–Gly-31 are enriched in gly residues.

It belongs to the universal ribosomal protein uL15 family. In terms of assembly, part of the 50S ribosomal subunit.

In terms of biological role, binds to the 23S rRNA. The polypeptide is Large ribosomal subunit protein uL15 (Hamiltonella defensa subsp. Acyrthosiphon pisum (strain 5AT)).